The following is a 224-amino-acid chain: Proline/serine-rich protein C17A5.10 (224 aa).

Positions 1–10 are enriched in pro residues; the sequence is MTDDSVPPPS. A disordered region spans residues 1-110; it reads MTDDSVPPPS…SNYNTAKPPY (110 aa). The span at 31-52 shows a compositional bias: low complexity; sequence TSTSAGHPSSSSSTLPNYAASS. Polar residues-rich tracts occupy residues 53–68, 77–94, and 101–110; these read LNSR…NAYS, PTSQ…STMY, and SNYNTAKPPY.

The protein belongs to the HUA1 family.

It is found in the cytoplasm. Its function is as follows. May be involved in assembly and disassembly of the actin cytoskeleton. The chain is Proline/serine-rich protein C17A5.10 from Schizosaccharomyces pombe (strain 972 / ATCC 24843) (Fission yeast).